The chain runs to 357 residues: Aspartate carbamoyltransferase catalytic subunit (357 aa).

Over residues 1-17 the composition is skewed to polar residues; that stretch reads MSNSIDSQSIPTISPTD. The disordered stretch occupies residues 1–21; sequence MSNSIDSQSIPTISPTDYTKF. Carbamoyl phosphate contacts are provided by Arg-97 and Thr-98. Position 125 (Lys-125) interacts with L-aspartate. Residues Arg-147, His-177, and Gln-180 each coordinate carbamoyl phosphate. L-aspartate-binding residues include Arg-211 and Arg-266. Carbamoyl phosphate-binding residues include Gly-307 and Pro-308.

The protein belongs to the aspartate/ornithine carbamoyltransferase superfamily. ATCase family. As to quaternary structure, heterododecamer (2C3:3R2) of six catalytic PyrB chains organized as two trimers (C3), and six regulatory PyrI chains organized as three dimers (R2).

It carries out the reaction carbamoyl phosphate + L-aspartate = N-carbamoyl-L-aspartate + phosphate + H(+). The protein operates within pyrimidine metabolism; UMP biosynthesis via de novo pathway; (S)-dihydroorotate from bicarbonate: step 2/3. Its function is as follows. Catalyzes the condensation of carbamoyl phosphate and aspartate to form carbamoyl aspartate and inorganic phosphate, the committed step in the de novo pyrimidine nucleotide biosynthesis pathway. This is Aspartate carbamoyltransferase catalytic subunit from Psychrobacter arcticus (strain DSM 17307 / VKM B-2377 / 273-4).